Here is a 297-residue protein sequence, read N- to C-terminus: uncharacterized protein (297 aa).

Glu-46 is a catalytic residue.

The protein belongs to the PhzF family. As to quaternary structure, homodimer and homotetramer.

This is an uncharacterized protein from Salmonella typhimurium (strain LT2 / SGSC1412 / ATCC 700720).